Here is a 327-residue protein sequence, read N- to C-terminus: Endo-1,4-beta-xylanase A (327 aa).

The GH10 domain maps to 1–323 (AASGLEAAMK…KPSYTSTLNT (323 aa)). A disulfide bridge connects residues Cys81 and Cys123. N-linked (GlcNAc...) asparagine glycosylation is present at Asn101. Catalysis depends on Glu131, which acts as the Proton donor. The active-site Nucleophile is the Glu245. Cys273 and Cys279 are joined by a disulfide.

This sequence belongs to the glycosyl hydrolase 10 (cellulase F) family. In terms of assembly, monomer.

Its subcellular location is the secreted. The protein resides in the extracellular space. It carries out the reaction Endohydrolysis of (1-&gt;4)-beta-D-xylosidic linkages in xylans.. Its pathway is glycan degradation; xylan degradation. Functionally, catalyzes the hydrolysis of the internal glycosidic bonds in heteroxylans, releasing mainly xylobiose and xylotriose. Most active on oat-spelt xylan. The chain is Endo-1,4-beta-xylanase A from Fusarium oxysporum f. sp. lycopersici (strain 4287 / CBS 123668 / FGSC 9935 / NRRL 34936) (Fusarium vascular wilt of tomato).